Reading from the N-terminus, the 20-residue chain is Brevinin-1ITb (20 aa).

Methionine sulfoxide; partial is present on Met-8. Cysteines 14 and 20 form a disulfide.

The protein belongs to the frog skin active peptide (FSAP) family. Brevinin subfamily. In terms of tissue distribution, expressed by the skin glands.

It is found in the secreted. In terms of biological role, antimicrobial peptide. The polypeptide is Brevinin-1ITb (Rana italica (Italian stream frog)).